Consider the following 316-residue polypeptide: Olfactory receptor 4N4 (316 aa).

At Met1–Leu25 the chain is on the extracellular side. Asn5 is a glycosylation site (N-linked (GlcNAc...) asparagine). The chain crosses the membrane as a helical span at residues Leu26 to Ile49. Residues Arg50–Ala57 are Cytoplasmic-facing. Residues Pro58–Pro79 form a helical membrane-spanning segment. Residues Arg80–Gln100 lie on the Extracellular side of the membrane. A disulfide bridge connects residues Cys97 and Cys189. The helical transmembrane segment at Leu101–Phe120 threads the bilayer. Topologically, residues Asp121–Arg139 are cytoplasmic. The chain crosses the membrane as a helical span at residues Ala140–Ile158. Residues Gln159–Val195 are Extracellular-facing. Residues Glu196–Ala219 traverse the membrane as a helical segment. Residues Val220 to Lys235 lie on the Cytoplasmic side of the membrane. The helical transmembrane segment at Ala236–Tyr258 threads the bilayer. Topologically, residues Met259–Lys269 are extracellular. Residues Met270–Leu289 traverse the membrane as a helical segment. Residues Arg290–Asn316 are Cytoplasmic-facing.

Belongs to the G-protein coupled receptor 1 family.

The protein resides in the cell membrane. In terms of biological role, odorant receptor. This is Olfactory receptor 4N4 (OR4N4) from Homo sapiens (Human).